Here is a 111-residue protein sequence, read N- to C-terminus: Nucleoid-associated protein PputGB1_3833 (111 aa).

2 disordered regions span residues 1-25 (MMKGGMAGLMKQAQQMQEKMQKMQE) and 87-111 (EQSSQEKMGGMTAGMQLPPGFKMPF).

It belongs to the YbaB/EbfC family. As to quaternary structure, homodimer.

The protein resides in the cytoplasm. It is found in the nucleoid. Binds to DNA and alters its conformation. May be involved in regulation of gene expression, nucleoid organization and DNA protection. This Pseudomonas putida (strain GB-1) protein is Nucleoid-associated protein PputGB1_3833.